The sequence spans 433 residues: Serine/threonine-protein kinase DCLK1 (433 aa).

The segment at 1 to 74 (MLELIEVNGT…GEEESDEGFQ (74 aa)) is disordered. 10 positions are modified to phosphoserine: Ser-23, Ser-25, Ser-27, Ser-30, Ser-40, Ser-45, Ser-46, Ser-48, Ser-57, and Ser-69. A compositionally biased stretch (low complexity) spans 40-57 (SQHGGSSTSLSSTKVCSS). Residues 59 to 71 (DENDGPGEEESDE) show a composition bias toward acidic residues. One can recognise a Protein kinase domain in the interval 83–340 (YKVGRTIGDG…AVQVLEHPWV (258 aa)). ATP contacts are provided by residues 89–97 (IGDGNFAVV) and Lys-112. The active-site Proton acceptor is the Asp-204. At Tyr-213 the chain carries Phosphotyrosine. Residues 388 to 400 (QVFRRRRNQDVRG) show a composition bias toward basic and acidic residues. The interval 388-433 (QVFRRRRNQDVRGRYKAQPAPPELNSESEDYSPSSSETVRSPNSPF) is disordered. A phosphoserine mark is found at Ser-419, Ser-428, and Ser-431.

This sequence belongs to the protein kinase superfamily. CAMK Ser/Thr protein kinase family. CaMK subfamily.

The enzyme catalyses L-seryl-[protein] + ATP = O-phospho-L-seryl-[protein] + ADP + H(+). The catalysed reaction is L-threonyl-[protein] + ATP = O-phospho-L-threonyl-[protein] + ADP + H(+). Functionally, probable kinase that may be involved in a calcium-signaling pathway controlling neuronal migration in the developing brain. May also participate in functions of the mature nervous system. In Rattus norvegicus (Rat), this protein is Serine/threonine-protein kinase DCLK1 (Dclk1).